Consider the following 433-residue polypeptide: Enolase (433 aa).

Q166 is a (2R)-2-phosphoglycerate binding site. Catalysis depends on E208, which acts as the Proton donor. Mg(2+) is bound by residues D245, E290, and D317. K342, R371, S372, and K393 together coordinate (2R)-2-phosphoglycerate. Residue K342 is the Proton acceptor of the active site.

It belongs to the enolase family. Mg(2+) serves as cofactor.

It is found in the cytoplasm. The protein localises to the secreted. The protein resides in the cell surface. The catalysed reaction is (2R)-2-phosphoglycerate = phosphoenolpyruvate + H2O. Its pathway is carbohydrate degradation; glycolysis; pyruvate from D-glyceraldehyde 3-phosphate: step 4/5. In terms of biological role, catalyzes the reversible conversion of 2-phosphoglycerate (2-PG) into phosphoenolpyruvate (PEP). It is essential for the degradation of carbohydrates via glycolysis. The protein is Enolase of Clostridium novyi (strain NT).